The primary structure comprises 156 residues: ATP synthase subunit b (156 aa).

The helical transmembrane segment at 12 to 32 (VAFFIFVLFCMKYVWPPVIAA) threads the bilayer.

This sequence belongs to the ATPase B chain family. In terms of assembly, F-type ATPases have 2 components, F(1) - the catalytic core - and F(0) - the membrane proton channel. F(1) has five subunits: alpha(3), beta(3), gamma(1), delta(1), epsilon(1). F(0) has three main subunits: a(1), b(2) and c(10-14). The alpha and beta chains form an alternating ring which encloses part of the gamma chain. F(1) is attached to F(0) by a central stalk formed by the gamma and epsilon chains, while a peripheral stalk is formed by the delta and b chains.

The protein resides in the cell inner membrane. Its function is as follows. F(1)F(0) ATP synthase produces ATP from ADP in the presence of a proton or sodium gradient. F-type ATPases consist of two structural domains, F(1) containing the extramembraneous catalytic core and F(0) containing the membrane proton channel, linked together by a central stalk and a peripheral stalk. During catalysis, ATP synthesis in the catalytic domain of F(1) is coupled via a rotary mechanism of the central stalk subunits to proton translocation. Component of the F(0) channel, it forms part of the peripheral stalk, linking F(1) to F(0). This chain is ATP synthase subunit b, found in Pseudomonas syringae pv. tomato (strain ATCC BAA-871 / DC3000).